Consider the following 302-residue polypeptide: Sulfate adenylyltransferase subunit 2 (302 aa).

Residues 280 to 302 (RQGRLIDSDQSASMEQKKRQGYF) form a disordered region.

The protein belongs to the PAPS reductase family. CysD subfamily. Heterodimer composed of CysD, the smaller subunit, and CysN.

It carries out the reaction sulfate + ATP + H(+) = adenosine 5'-phosphosulfate + diphosphate. The protein operates within sulfur metabolism; hydrogen sulfide biosynthesis; sulfite from sulfate: step 1/3. Its function is as follows. With CysN forms the ATP sulfurylase (ATPS) that catalyzes the adenylation of sulfate producing adenosine 5'-phosphosulfate (APS) and diphosphate, the first enzymatic step in sulfur assimilation pathway. APS synthesis involves the formation of a high-energy phosphoric-sulfuric acid anhydride bond driven by GTP hydrolysis by CysN coupled to ATP hydrolysis by CysD. This chain is Sulfate adenylyltransferase subunit 2, found in Shewanella baltica (strain OS185).